Reading from the N-terminus, the 94-residue chain is Alpha-conotoxin Cp20.3 (94 aa).

The signal sequence occupies residues 1–24 (MPKLAVVLLVLLILPLSYFDAAGG). The propeptide occupies 25–45 (QAVQGDRRGNGLARYLQRGDR). E46 carries the post-translational modification 4-carboxyglutamate; partial. Residue E49 is modified to 4-carboxyglutamate. P55 carries the 4-hydroxyproline modification. 4 cysteine pairs are disulfide-bonded: C63–C72, C68–C80, C73–C90, and C78–C92.

The protein belongs to the conotoxin D superfamily. As to quaternary structure, hetero-, homo- or pseudo-homodimer (identical sequence, different post-translational modifications). Expressed by the venom duct.

It is found in the secreted. Alpha-D-conopeptides act on postsynaptic membranes, they bind to the nicotinic acetylcholine receptors (nAChR) and thus inhibit them. Through its two C-terminal domains, this homodimeric protein would bind to two nAChR allosteric sites, located outside the nAChR C-loop of the principal binding face and at the adjacent binding interface in a clockwise direction. This toxin specifically blocks mammalian neuronal nAChR of the alpha-7/CHRNA7 (IC(50)=0.25 nM), alpha-3-beta-2/CHRNA3-CHRNB2 (IC(50)=2.8 nM), and alpha-4-beta-2/CHRNA4-CHRNB2 (IC(50)=28.6 nM) subtypes. Has no effect on alpha-3-beta-4/CHRNA3-CHRNB4, alpha-4-beta-4/CHRNA4-CHRNB4 and alpha-1-beta-1-epsilon-delta/CHRNA1-CHRNB1-CHRNE-CHRND subtypes of nAChRs. In Conus capitaneus (Captain cone), this protein is Alpha-conotoxin Cp20.3.